The sequence spans 341 residues: ATP-dependent 6-phosphofructokinase 3 (341 aa).

Residues Gly10, 72–73 (RV), and 102–105 (GEGT) contribute to the ATP site. Glu103 provides a ligand contact to Mg(2+). Substrate is bound by residues 125–127 (TID), Arg162, 169–171 (MGR), Glu222, Arg266, and 272–275 (HVQR). The active-site Proton acceptor is Asp127.

The protein belongs to the phosphofructokinase type A (PFKA) family. Mixed-substrate PFK group III subfamily. As to quaternary structure, homodimer or homotetramer. Mg(2+) serves as cofactor.

It localises to the cytoplasm. It catalyses the reaction beta-D-fructose 6-phosphate + ATP = beta-D-fructose 1,6-bisphosphate + ADP + H(+). It participates in carbohydrate degradation; glycolysis; D-glyceraldehyde 3-phosphate and glycerone phosphate from D-glucose: step 3/4. Catalyzes the phosphorylation of D-fructose 6-phosphate to fructose 1,6-bisphosphate by ATP, the first committing step of glycolysis. The sequence is that of ATP-dependent 6-phosphofructokinase 3 from Streptomyces coelicolor (strain ATCC BAA-471 / A3(2) / M145).